Consider the following 157-residue polypeptide: SsrA-binding protein (157 aa).

Belongs to the SmpB family.

The protein localises to the cytoplasm. Required for rescue of stalled ribosomes mediated by trans-translation. Binds to transfer-messenger RNA (tmRNA), required for stable association of tmRNA with ribosomes. tmRNA and SmpB together mimic tRNA shape, replacing the anticodon stem-loop with SmpB. tmRNA is encoded by the ssrA gene; the 2 termini fold to resemble tRNA(Ala) and it encodes a 'tag peptide', a short internal open reading frame. During trans-translation Ala-aminoacylated tmRNA acts like a tRNA, entering the A-site of stalled ribosomes, displacing the stalled mRNA. The ribosome then switches to translate the ORF on the tmRNA; the nascent peptide is terminated with the 'tag peptide' encoded by the tmRNA and targeted for degradation. The ribosome is freed to recommence translation, which seems to be the essential function of trans-translation. This is SsrA-binding protein from Limosilactobacillus reuteri (strain DSM 20016) (Lactobacillus reuteri).